Here is a 275-residue protein sequence, read N- to C-terminus: Ribosomal RNA small subunit methyltransferase A (275 aa).

Asparagine 27, leucine 29, glycine 54, glutamate 76, aspartate 102, and asparagine 123 together coordinate S-adenosyl-L-methionine.

This sequence belongs to the class I-like SAM-binding methyltransferase superfamily. rRNA adenine N(6)-methyltransferase family. RsmA subfamily.

The protein resides in the cytoplasm. The catalysed reaction is adenosine(1518)/adenosine(1519) in 16S rRNA + 4 S-adenosyl-L-methionine = N(6)-dimethyladenosine(1518)/N(6)-dimethyladenosine(1519) in 16S rRNA + 4 S-adenosyl-L-homocysteine + 4 H(+). Functionally, specifically dimethylates two adjacent adenosines (A1518 and A1519) in the loop of a conserved hairpin near the 3'-end of 16S rRNA in the 30S particle. May play a critical role in biogenesis of 30S subunits. This is Ribosomal RNA small subunit methyltransferase A from Chelativorans sp. (strain BNC1).